The following is a 216-amino-acid chain: Uracil phosphoribosyltransferase (216 aa).

5-phospho-alpha-D-ribose 1-diphosphate-binding positions include arginine 85, arginine 110, and 135–143 (DPMVATGYS). Uracil is bound by residues isoleucine 200 and 205 to 207 (GDA). Aspartate 206 is a binding site for 5-phospho-alpha-D-ribose 1-diphosphate.

The protein belongs to the UPRTase family. The cofactor is Mg(2+).

It catalyses the reaction UMP + diphosphate = 5-phospho-alpha-D-ribose 1-diphosphate + uracil. It functions in the pathway pyrimidine metabolism; UMP biosynthesis via salvage pathway; UMP from uracil: step 1/1. With respect to regulation, allosterically activated by GTP. Functionally, catalyzes the conversion of uracil and 5-phospho-alpha-D-ribose 1-diphosphate (PRPP) to UMP and diphosphate. The polypeptide is Uracil phosphoribosyltransferase (Burkholderia ambifaria (strain MC40-6)).